The following is a 420-amino-acid chain: MKRSGKIFTTAMLAVTLMMPAMGVSANEGNAAAEGNEKFRVLVDSVDQKNLKNAKQQYGVHWDFAGEGFTTDMNEKQFNALKKNKNLTVEKVPELEIATATDKPEALYNAMAASQSTPWGIKAIYNNSSITQTSGGGGINIAVLDTGVNTNHPDLRNNVEQCKDFTVGTTYTNNSCTDRQGHGTHVAGSALADGGTGNGVYGVAPDADLWAYKVLGDDGSGYADDIAAAIRHAGDQATALNTKVVINMSLGSSGESSLITNAVNYSYNKGVLIIAAAGNSGPYQGSIGYPGALVNAVAVAALENKVENGTYRVADFSSRGYSWTDGDYAIQKGDVEISAPGAAIYSTWFDGGYATISGTSMASPHAAGLAAKIWAQYPSASNVDVRGELQYRAYENDILSGYYAGYGDDFASGFGFATVQ.

An N-terminal signal peptide occupies residues 1–31 (MKRSGKIFTTAMLAVTLMMPAMGVSANEGNA). Positions 32-111 (AAEGNEKFRV…DKPEALYNAM (80 aa)) are excised as a propeptide. A Ca(2+)-binding site is contributed by Gln-115. A Peptidase S8 domain is found at 118–420 (PWGIKAIYNN…ASGFGFATVQ (303 aa)). Asp-145 acts as the Charge relay system in catalysis. Residue Asp-154 coordinates Ca(2+). Residues His-182 and Ser-360 each act as charge relay system in the active site.

This sequence belongs to the peptidase S8 family. Ca(2+) serves as cofactor.

Its subcellular location is the secreted. It catalyses the reaction Hydrolysis of proteins with broad specificity for peptide bonds, and a preference for a large uncharged residue in P1. Hydrolyzes peptide amides.. Functionally, subtilisin is an extracellular alkaline serine protease, it catalyzes the hydrolysis of proteins and peptide amides. The chain is Subtilisin (sub1) from Bacillus sp. (strain TA39).